We begin with the raw amino-acid sequence, 20 residues long: Maximin-Ht (20 aa).

This sequence belongs to the bombinin family. As to expression, expressed by the skin glands.

The protein resides in the secreted. In terms of biological role, has antimicrobial activity. The polypeptide is Maximin-Ht (Bombina maxima (Giant fire-bellied toad)).